The sequence spans 396 residues: MTNIRITEVFTQAMPVLEKLEEAGFEAYFVGGCVRDLLLERPIHDVDIATSAYPEEVKETFAKSIDTGIQHGTVTVLYGGSSYEITTFRTESGYQDFRRPDKVTFVQNLDEDLKRRDFTINALAMNRQGEIIDLFDGLGDLKRRVIKAVGVAEDRFHEDALRMMRAVRFMSQLSFSLEEKTRQAIINNHELLSKISVERIREEFVKLALGKDSRQAFKDFLATGLSEECPGLAGKKDQLSVLTDLKAGPDDEAVFWSLIAVLINLPADKISPFMRAWKNSNAMNQQVRQIVAAFDLLSRGEESDFDLFEIGQENLEAALKLAGLLGKPLSSQVLLDRYNRLPIKAAGELAIDGQWLIKEGIKPSPELGQLLRKALEGVVSGQVENSQAAIAEFLAI.

2 residues coordinate ATP: Gly-32 and Arg-35. CTP is bound by residues Gly-32 and Arg-35. Residues Asp-45 and Asp-47 each coordinate Mg(2+). Residues Arg-116, Asp-159, Arg-162, Arg-165, and Arg-168 each coordinate ATP. CTP-binding residues include Arg-116, Asp-159, Arg-162, Arg-165, and Arg-168.

It belongs to the tRNA nucleotidyltransferase/poly(A) polymerase family. Bacterial CCA-adding enzyme type 3 subfamily. Homodimer. Requires Mg(2+) as cofactor.

The catalysed reaction is a tRNA precursor + 2 CTP + ATP = a tRNA with a 3' CCA end + 3 diphosphate. It carries out the reaction a tRNA with a 3' CCA end + 2 CTP + ATP = a tRNA with a 3' CCACCA end + 3 diphosphate. In terms of biological role, catalyzes the addition and repair of the essential 3'-terminal CCA sequence in tRNAs without using a nucleic acid template. Adds these three nucleotides in the order of C, C, and A to the tRNA nucleotide-73, using CTP and ATP as substrates and producing inorganic pyrophosphate. tRNA 3'-terminal CCA addition is required both for tRNA processing and repair. Also involved in tRNA surveillance by mediating tandem CCA addition to generate a CCACCA at the 3' terminus of unstable tRNAs. While stable tRNAs receive only 3'-terminal CCA, unstable tRNAs are marked with CCACCA and rapidly degraded. The polypeptide is CCA-adding enzyme (Lactobacillus delbrueckii subsp. bulgaricus (strain ATCC 11842 / DSM 20081 / BCRC 10696 / JCM 1002 / NBRC 13953 / NCIMB 11778 / NCTC 12712 / WDCM 00102 / Lb 14)).